Consider the following 78-residue polypeptide: Leukemia-associated protein 1 (78 aa).

In terms of biological role, may act as a tumor suppressor. The chain is Leukemia-associated protein 1 (DLEU1) from Homo sapiens (Human).